Consider the following 177-residue polypeptide: Peroxiredoxin-2 (177 aa).

Ala-2 is subject to N-acetylalanine. The Thioredoxin domain maps to 6-164 (ARIGKPAPDF…ALRLVQAFQY (159 aa)). Catalysis depends on Cys-51, which acts as the Cysteine sulfenic acid (-SOH) intermediate. A Phosphoserine modification is found at Ser-112.

It belongs to the peroxiredoxin family. AhpC/Prx1 subfamily. In terms of assembly, homodimer; disulfide-linked, upon oxidation. 5 homodimers assemble to form a ring-like decamer. Interacts with TIPIN. Post-translationally, the enzyme can be inactivated by further oxidation of the cysteine sulfenic acid (C(P)-SOH) to sulphinic acid (C(P)-SO2H) instead of its condensation to a disulfide bond. It can be reactivated by forming a transient disulfide bond with sulfiredoxin SRXN1, which reduces the cysteine sulfinic acid in an ATP- and Mg-dependent manner. In terms of processing, acetylation increases resistance to transition to high molecular-mass complexes. Deacetylated by HDAC6 which decreases reducing activity.

It is found in the cytoplasm. The catalysed reaction is a hydroperoxide + [thioredoxin]-dithiol = an alcohol + [thioredoxin]-disulfide + H2O. Thiol-specific peroxidase that catalyzes the reduction of hydrogen peroxide and organic hydroperoxides to water and alcohols, respectively. Plays a role in cell protection against oxidative stress by detoxifying peroxides and as sensor of hydrogen peroxide-mediated signaling events. Might participate in the signaling cascades of growth factors and tumor necrosis factor-alpha by regulating the intracellular concentrations of H(2)O(2). The protein is Peroxiredoxin-2 (PRDX2) of Pongo abelii (Sumatran orangutan).